We begin with the raw amino-acid sequence, 477 residues long: tRNA-2-methylthio-N(6)-dimethylallyladenosine synthase (477 aa).

The region spanning 3–120 (KKLYIKTWGC…LPEMINELKG (118 aa)) is the MTTase N-terminal domain. 6 residues coordinate [4Fe-4S] cluster: cysteine 12, cysteine 49, cysteine 83, cysteine 157, cysteine 161, and cysteine 164. A Radical SAM core domain is found at 143–375 (RAEGPTAFVS…QQRITQQALR (233 aa)). The TRAM domain maps to 378–441 (RHMVGTEQRI…TNSLRGEVVR (64 aa)).

The protein belongs to the methylthiotransferase family. MiaB subfamily. As to quaternary structure, monomer. It depends on [4Fe-4S] cluster as a cofactor.

Its subcellular location is the cytoplasm. The catalysed reaction is N(6)-dimethylallyladenosine(37) in tRNA + (sulfur carrier)-SH + AH2 + 2 S-adenosyl-L-methionine = 2-methylsulfanyl-N(6)-dimethylallyladenosine(37) in tRNA + (sulfur carrier)-H + 5'-deoxyadenosine + L-methionine + A + S-adenosyl-L-homocysteine + 2 H(+). Catalyzes the methylthiolation of N6-(dimethylallyl)adenosine (i(6)A), leading to the formation of 2-methylthio-N6-(dimethylallyl)adenosine (ms(2)i(6)A) at position 37 in tRNAs that read codons beginning with uridine. In Alteromonas mediterranea (strain DSM 17117 / CIP 110805 / LMG 28347 / Deep ecotype), this protein is tRNA-2-methylthio-N(6)-dimethylallyladenosine synthase.